A 384-amino-acid chain; its full sequence is Magnesium transporter MRS2-I (384 aa).

The next 2 helical transmembrane spans lie at L319–G339 and W356–A376. A Required for magnesium transport activity motif is present at residues G339–N341.

The protein belongs to the CorA metal ion transporter (MIT) (TC 1.A.35.5) family.

It is found in the membrane. Magnesium transporter that may mediate the influx of magnesium. This Oryza sativa subsp. japonica (Rice) protein is Magnesium transporter MRS2-I (MRS2-I).